Here is a 181-residue protein sequence, read N- to C-terminus: LEM domain-containing protein 1 (181 aa).

An LEM domain is found at 1 to 45; that stretch reads MVDVKCLSDCKLQNQLEKLGFSPGPILPSTRKLYEKKLVQLLVSP. Residues 152–172 form a helical; Signal-anchor for type II membrane protein membrane-spanning segment; it reads FPVGLKLAVLGIFIIVVFVYL.

Testis-specific. Isoform 6 is detected in 17 of 18 colon cancer tissues examined.

Its subcellular location is the membrane. The protein is LEM domain-containing protein 1 (LEMD1) of Homo sapiens (Human).